Consider the following 952-residue polypeptide: Protein translocase subunit SecA (952 aa).

ATP is bound by residues Gln-135, 153–157 (GEGKT), and Asp-575. A compositionally biased stretch (low complexity) spans 916 to 930 (VSAKAATQPAAPAAK). Residues 916–952 (VSAKAATQPAAPAAKEVGRNDPCPCGSGKKYKKCCGK) are disordered. 4 residues coordinate Zn(2+): Cys-938, Cys-940, Cys-949, and Cys-950.

Belongs to the SecA family. As to quaternary structure, monomer and homodimer. Part of the essential Sec protein translocation apparatus which comprises SecA, SecYEG and auxiliary proteins SecDF. Other proteins may also be involved. Requires Zn(2+) as cofactor.

The protein localises to the cell membrane. It localises to the cytoplasm. It carries out the reaction ATP + H2O + cellular proteinSide 1 = ADP + phosphate + cellular proteinSide 2.. Functionally, part of the Sec protein translocase complex. Interacts with the SecYEG preprotein conducting channel. Has a central role in coupling the hydrolysis of ATP to the transfer of proteins into and across the cell membrane, serving as an ATP-driven molecular motor driving the stepwise translocation of polypeptide chains across the membrane. This chain is Protein translocase subunit SecA, found in Dehalococcoides mccartyi (strain ATCC BAA-2266 / KCTC 15142 / 195) (Dehalococcoides ethenogenes (strain 195)).